Here is a 157-residue protein sequence, read N- to C-terminus: ATP synthase subunit b (157 aa).

The helical transmembrane segment at 7–29 (MFGQLIMFTMFTWFCMKFVWPPI) threads the bilayer.

Belongs to the ATPase B chain family. As to quaternary structure, F-type ATPases have 2 components, F(1) - the catalytic core - and F(0) - the membrane proton channel. F(1) has five subunits: alpha(3), beta(3), gamma(1), delta(1), epsilon(1). F(0) has three main subunits: a(1), b(2) and c(10-14). The alpha and beta chains form an alternating ring which encloses part of the gamma chain. F(1) is attached to F(0) by a central stalk formed by the gamma and epsilon chains, while a peripheral stalk is formed by the delta and b chains.

Its subcellular location is the cell inner membrane. Its function is as follows. F(1)F(0) ATP synthase produces ATP from ADP in the presence of a proton or sodium gradient. F-type ATPases consist of two structural domains, F(1) containing the extramembraneous catalytic core and F(0) containing the membrane proton channel, linked together by a central stalk and a peripheral stalk. During catalysis, ATP synthesis in the catalytic domain of F(1) is coupled via a rotary mechanism of the central stalk subunits to proton translocation. In terms of biological role, component of the F(0) channel, it forms part of the peripheral stalk, linking F(1) to F(0). This Ruthia magnifica subsp. Calyptogena magnifica protein is ATP synthase subunit b.